Here is a 311-residue protein sequence, read N- to C-terminus: Olfactory receptor 14I1 (311 aa).

Over 1–26 (MDNLTKVTEFLLMEFSGIWELQVLHA) the chain is Extracellular. Asn3 carries an N-linked (GlcNAc...) asparagine glycan. The helical transmembrane segment at 27–47 (GLFLLIYLAVLVGNLLIIAVI) threads the bilayer. The Cytoplasmic portion of the chain corresponds to 48–55 (TLDQHLHT). A helical membrane pass occupies residues 56 to 76 (PMYFFLKNLSVLDLCYISVTV). Residues 77–92 (PKSIRNSLTRRSSISY) lie on the Extracellular side of the membrane. A helical membrane pass occupies residues 93–113 (LGCVAQVYFFSAFASAELAFL). A disulfide bond links Cys95 and Cys188. Residues 114–141 (TVMSYDRYVAICHPLQYRAVMTSGGCYQ) are Cytoplasmic-facing. A helical membrane pass occupies residues 142-162 (MAVTTWLSCFSYAAVHTGNMF). Topologically, residues 163 to 189 (REHVCRSSVIHQFFRDIPHVLALVSCE) are extracellular. A helical transmembrane segment spans residues 190-210 (VFFVEFLTLALSSCLVLGCFI). At 211–241 (LMMISYFQIFSTVLRIPSGQSRAKAFSTCSP) the chain is on the cytoplasmic side. A helical membrane pass occupies residues 242–262 (QLIVIMLFLTTGLFAALGPIA). Residues 263 to 269 (KALSIQD) lie on the Extracellular side of the membrane. Residues 270–290 (LVIALTYTVLPPFLNPIIYSL) traverse the membrane as a helical segment. At 291–311 (RNKEIKTAMWRLFVKIYFLQK) the chain is on the cytoplasmic side.

The protein belongs to the G-protein coupled receptor 1 family.

It localises to the cell membrane. In terms of biological role, odorant receptor. The polypeptide is Olfactory receptor 14I1 (OR14I1) (Homo sapiens (Human)).